We begin with the raw amino-acid sequence, 337 residues long: MKIDTSLNMPQLPEALSQAGLQFSVATEEDFDEIMAMSQDIYGGLDYLPTRYTSWLQDTNRTVILARKHGKVIALESVCVIDDGETMLVEGLRVAPQERGKGVAGVLLRFCAELVKSRYPEVKVCRLTRDDQLGPKDFEKYRIITKQGILLMRFRAEDLKLHLSEFGLEGDNESTLSTFCSSPPPVRLDHTAIQQLYLNSDLLHGVLPNATIIQDWQPFKLLPSNMAILLKKEIDWMVDDMSNPTVASLCTFPFRVPIGDDWYYLNIDMFGKDLALARQQFLYHLQRHTATLKGHVMCQMFLDPPLWKAMAEFCHNTLSVELVKEYTEQCVVECDLI.

A propeptide spans Met-1–Lys-2 (removed in mature form). The region spanning Leu-21 to Glu-157 is the N-acetyltransferase domain.

Expressed exclusively in the brain and lens.

The enzyme catalyses L-histidine + acetyl-CoA = N(alpha)-acetyl-L-histidine + CoA + H(+). Enzyme responsible for the N-acetyl-histidine (NAH) synthesis, which is a major constituent of brain and lens of ectothermic vertebrates. This Oreochromis niloticus (Nile tilapia) protein is Histidine N-acetyltransferase (hisat).